A 302-amino-acid chain; its full sequence is S-crystallin SL4 (302 aa).

3 tandem repeats follow at residues 45–54, 55–64, and 65–74. The 4 X approximate tandem repeats of G-G-Y-[AYP]-V-[QK]-[SG]-R-G-D stretch occupies residues 45–84; sequence GGYAVQSRGDGGYYVKSRGDGGYPVQGRGDTGYSSQTRSD. Short sequence motifs (cell attachment site) lie at residues 52–54, 62–64, and 72–74; these read RGD. Residues 68–92 form a disordered region; the sequence is PVQGRGDTGYSSQTRSDDACLGQGR. The stretch at 75 to 84 is one 4; approximate repeat; sequence TGYSSQTRSD. The Cell attachment site motif lies at 113–115; it reads RGD. The tract at residues 118 to 205 is disordered; that stretch reads SDINSGLYSG…ESASRRSRNH (88 aa). 2 stretches are compositionally biased toward basic and acidic residues: residues 129 to 166 and 177 to 192; these read RMDD…HYRS and AEDR…RIDI. A GST C-terminal domain is found at 183–302; sequence GHSDSHRIDI…YIKRRYQSDF (120 aa).

Belongs to the GST superfamily.

S-crystallins are structural components of squids and octopi eye lens. The polypeptide is S-crystallin SL4 (Nototodarus sloanii (Wellington flying squid)).